The chain runs to 245 residues: Octopine transport system permease protein OccM (245 aa).

The next 5 helical transmembrane spans lie at 12–32 (FIAL…SIAV), 57–77 (FYIF…IYYG), 96–116 (AYWC…AEIM), 163–183 (VLMV…ITGI), and 199–219 (ACAG…FALI). One can recognise an ABC transmembrane type-1 domain in the interval 19-216 (IPLALKLAVF…TMNFIAARLF (198 aa)).

This sequence belongs to the binding-protein-dependent transport system permease family. HisMQ subfamily.

The protein resides in the cell inner membrane. Its function is as follows. Component of the octopine active transport system probably consisting of four subunits: Q, M, P and T. The polypeptide is Octopine transport system permease protein OccM (occM) (Rhizobium meliloti (Ensifer meliloti)).